The primary structure comprises 284 residues: 2-dehydro-3-deoxyphosphooctonate aldolase (284 aa).

Belongs to the KdsA family.

The protein resides in the cytoplasm. The catalysed reaction is D-arabinose 5-phosphate + phosphoenolpyruvate + H2O = 3-deoxy-alpha-D-manno-2-octulosonate-8-phosphate + phosphate. It participates in carbohydrate biosynthesis; 3-deoxy-D-manno-octulosonate biosynthesis; 3-deoxy-D-manno-octulosonate from D-ribulose 5-phosphate: step 2/3. It functions in the pathway bacterial outer membrane biogenesis; lipopolysaccharide biosynthesis. The polypeptide is 2-dehydro-3-deoxyphosphooctonate aldolase (Glaesserella parasuis serovar 5 (strain SH0165) (Haemophilus parasuis)).